A 2108-amino-acid chain; its full sequence is Mucin-5B (2108 aa).

The N-terminal stretch at 1–21 (MEIKKERSFWIFCLIWSFCKG) is a signal peptide. Positions 36–203 (SECTTWGNFH…KVEDPSEKCP (168 aa)) constitute a VWFD 1 domain. Disulfide bonds link Cys-38/Cys-166 and Cys-60/Cys-202. Residues 196-219 (EDPSEKCPDVRPDDHTGRHPTEDD) are disordered. Positions 304-360 (CPSNMEYMECGNSCADTCADPERSKICKAPCTDGCFCPPGTILDDLGGKKCVPRDSC) constitute a TIL 1 domain. A glycan (N-linked (GlcNAc...) (complex) asparagine) is linked at Asn-381. One can recognise a VWFD 2 domain in the interval 398–570 (GSCSIDGGFH…NSWKTRASCF (173 aa)). Disulfide bonds link Cys-400–Cys-534, Cys-422–Cys-569, and Cys-443–Cys-451. Asn-528, Asn-599, Asn-680, and Asn-772 each carry an N-linked (GlcNAc...) (complex) asparagine glycan. The 58-residue stretch at 666 to 723 (CPETMVYNYSVKYCNQSCRSLDEPDPLCKVQIAPMEGCGCPEGTYLNDEEECVTPDDC) folds into the TIL 2 domain. A TIL 3 domain is found at 782–825 (GSECQKSCKTQDMHCYVTECVSGCMCPDGLVLDGSGGCIPKDQC). The region spanning 825–897 (CPCVHGGHFY…DYILAQDFCP (73 aa)) is the VWFC 1 domain. Residue Asn-855 is glycosylated (N-linked (GlcNAc...) (complex) asparagine). The VWFD 3 domain occupies 863–1033 (GTCTVYGNGH…NSWKITSTCS (171 aa)). 4 cysteine pairs are disulfide-bonded: Cys-865/Cys-997, Cys-887/Cys-1032, Cys-896/Cys-994, and Cys-914/Cys-921. 4 N-linked (GlcNAc...) (complex) asparagine glycosylation sites follow: Asn-1036, Asn-1219, Asn-1371, and Asn-1452. In terms of domain architecture, VWFD 4 spans 1429 to 1613 (CICSGWGNEH…APVSTNRYCN (185 aa)). Cystine bridges form between Cys-1431-Cys-1573, Cys-1453-Cys-1612, and Cys-1477-Cys-1485. 5 N-linked (GlcNAc...) (complex) asparagine glycosylation sites follow: Asn-1567, Asn-1639, Asn-1792, Asn-1807, and Asn-1841. Positions 1761 to 1832 (CGCTAQDGSV…DPCCTETVCE (72 aa)) constitute a VWFC 2 domain. Residues 1870-1937 (GVCVSEGVEF…KEGQCCSQCQ (68 aa)) enclose the VWFC 3 domain. N-linked (GlcNAc...) (complex) asparagine glycosylation occurs at Asn-1964. Cystine bridges form between Cys-2010–Cys-2066, Cys-2031–Cys-2080, Cys-2042–Cys-2096, and Cys-2046–Cys-2098. The 95-residue stretch at 2010–2104 (CIDLPHKCKR…ECGCVETKCP (95 aa)) folds into the CTCK domain.

In terms of assembly, homomultimer; disulfide-linked. The N- and C-terminus mediate their assembly into higher order structures to form filaments. The CTCK domains of two polypeptides associate in the endoplasmic reticulum to generate intermolecularly disulfide-bonded dimers. These dimers progress to the Golgi apparatus, which is a more acidic environment than the endoplasmic reticulum. Under acidic conditions, the N-termini form non-covalent intermolecular interactions that juxtapose assemblies from different CTCK-linked dimers to produce long, disulfide-linked polymers that remain highly compact until secretion. In terms of processing, N-glycosylated. Complex glycosylation with bisecting N-acetylglucosamine. Contains mainly N-acetylglucosamine (3.1-8.5%), mannose (2.9-4.6%), a small amount of galactose (1.1-4.35) and sialic acid (0.3-1.3%). Most abundant glycan is composed of a GlcNAc(2)Man(3) core, a bisecting GlcNAc and another 3 GlcNAc antannae located on the mannoses of the core. Site Asn-1639 exists both in glycosylated and non-glycosylated forms.

The protein resides in the secreted. Functionally, ovomucin, the glycoprotein responsible for the gel properties of egg white, is composed for 2 subunits, alpha-ovomucin/MUC5B and beta-ovomucin/MUC6. The polypeptide is Mucin-5B (MUC5B) (Gallus gallus (Chicken)).